A 306-amino-acid chain; its full sequence is Brix domain-containing protein C4F8.04 (306 aa).

Positions 16 to 49 (KALHQKNKDKLERRKERAKEEEKDPEKKRLRLSE) are disordered. The segment covering 21–42 (KNKDKLERRKERAKEEEKDPEK) has biased composition (basic and acidic residues). In terms of domain architecture, Brix spans 94–283 (PKLLVTTSKR…LRMVQKGVWD (190 aa)).

In Schizosaccharomyces pombe (strain 972 / ATCC 24843) (Fission yeast), this protein is Brix domain-containing protein C4F8.04.